Consider the following 206-residue polypeptide: Large ribosomal subunit protein uL4 (206 aa).

The segment at alanine 51–glycine 76 is disordered.

The protein belongs to the universal ribosomal protein uL4 family. As to quaternary structure, part of the 50S ribosomal subunit.

Its function is as follows. One of the primary rRNA binding proteins, this protein initially binds near the 5'-end of the 23S rRNA. It is important during the early stages of 50S assembly. It makes multiple contacts with different domains of the 23S rRNA in the assembled 50S subunit and ribosome. Functionally, forms part of the polypeptide exit tunnel. In Clostridium kluyveri (strain ATCC 8527 / DSM 555 / NBRC 12016 / NCIMB 10680 / K1), this protein is Large ribosomal subunit protein uL4.